Reading from the N-terminus, the 453-residue chain is SH2 domain-containing protein 4A (453 aa).

Residues 96 to 127 (EIIAEQARREAEKEAEQLRKKQEVELSQLSTL) adopt a coiled-coil conformation. Positions 280 to 301 (AVKRPPIPPKPKLPPSANNSSI) are disordered. Residues 284 to 293 (PPIPPKPKLP) are compositionally biased toward pro residues. In terms of domain architecture, SH2 spans 347–439 (WFHGIISRQE…LGRELLRFPC (93 aa)).

It localises to the cytoplasm. In terms of biological role, inhibits estrogen-induced cell proliferation. The sequence is that of SH2 domain-containing protein 4A (sh2d4a) from Xenopus tropicalis (Western clawed frog).